An 82-amino-acid polypeptide reads, in one-letter code: Cytochrome b559 subunit alpha (82 aa).

A helical transmembrane segment spans residues 22–36 (IIHAVALPAIFVAGF). His-24 is a binding site for heme.

The protein belongs to the PsbE/PsbF family. In terms of assembly, heterodimer of an alpha subunit and a beta subunit. PSII is composed of 1 copy each of membrane proteins PsbA, PsbB, PsbC, PsbD, PsbE, PsbF, PsbH, PsbI, PsbJ, PsbK, PsbL, PsbM, PsbT, PsbX, PsbY, Psb30/Ycf12, peripheral proteins PsbO, CyanoQ (PsbQ), PsbU, PsbV and a large number of cofactors. It forms dimeric complexes. It depends on heme b as a cofactor.

Its subcellular location is the cellular thylakoid membrane. This b-type cytochrome is tightly associated with the reaction center of photosystem II (PSII). PSII is a light-driven water:plastoquinone oxidoreductase that uses light energy to abstract electrons from H(2)O, generating O(2) and a proton gradient subsequently used for ATP formation. It consists of a core antenna complex that captures photons, and an electron transfer chain that converts photonic excitation into a charge separation. The sequence is that of Cytochrome b559 subunit alpha from Prochlorococcus marinus (strain NATL1A).